Reading from the N-terminus, the 610-residue chain is Autophagy-related protein 22-1 (610 aa).

Over residues methionine 1–proline 11 the composition is skewed to pro residues. The segment at methionine 1 to proline 29 is disordered. Residues isoleucine 35–serine 55 traverse the membrane as a helical segment. Residue asparagine 90 is glycosylated (N-linked (GlcNAc...) asparagine). 3 helical membrane passes run serine 120–phenylalanine 140, threonine 152–valine 171, and cysteine 189–proline 209. Residues glycine 229–proline 265 form a disordered region. Residues glutamate 232–glutamate 243 show a composition bias toward basic and acidic residues. N-linked (GlcNAc...) asparagine glycosylation occurs at asparagine 261. 8 helical membrane-spanning segments follow: residues valine 278–alanine 298, threonine 310–valine 330, valine 384–isoleucine 404, valine 418–valine 438, leucine 453–phenylalanine 473, phenylalanine 488–glycine 510, tyrosine 522–isoleucine 544, and glycine 553–alanine 573. The tract at residues alanine 588–alanine 610 is disordered. The segment covering glutamate 594–glutamate 603 has biased composition (acidic residues).

The protein belongs to the ATG22 family.

It is found in the vacuole membrane. Vacuolar effluxer which mediate the efflux of amino acids resulting from autophagic degradation. The release of autophagic amino acids allows the maintenance of protein synthesis and viability during nitrogen starvation. This chain is Autophagy-related protein 22-1 (atg22-1), found in Aspergillus terreus (strain NIH 2624 / FGSC A1156).